Here is a 449-residue protein sequence, read N- to C-terminus: Putative methylthiotransferase MJ0865 (449 aa).

A Radical SAM core domain is found at 163–390 (SIRGANVYIE…EGEYRKLGLS (228 aa)). Positions 177, 181, and 184 each coordinate [4Fe-4S] cluster.

This sequence belongs to the methylthiotransferase family. [4Fe-4S] cluster is required as a cofactor.

This is Putative methylthiotransferase MJ0865 from Methanocaldococcus jannaschii (strain ATCC 43067 / DSM 2661 / JAL-1 / JCM 10045 / NBRC 100440) (Methanococcus jannaschii).